A 968-amino-acid chain; its full sequence is MPFTLGQRWISDTESELGLGTVVAVDARTVTLLFPSTGENRLYARSDSPVTRVMFNPGDTITSHDGWQMQVEEVKEENGLLTYIGTRLDTEESGVALREVFLDSKLVFSKPQDRLFAGQIDRMDRFALRYRARKYSSEQFRMPYSGLRGQRTSLIPHQLNIAHDVGRRHAPRVLLADEVGLGKTIEAGMILHQQLLSGAAERVLIIVPETLQHQWLVEMLRRFNLRFALFDDERYAEAQHDAYNPFDTEQLVICSLDFARRSKQRLEHLCEAEWDLLVVDEAHHLVWSEDAPSREYQAIEQLAEHVPGVLLLTATPEQLGMESHFARLRLLDPNRFHDFAQFVEEQKNYRPVADAVAMLLAGNKLSNDELNMLGEMIGEQDIEPLLQAANSDSEDAQSARQELVSMLMDRHGTSRVLFRNTRNGVKGFPKRELHTIKLPLPTQYQTAIKVSGIMGARKSAEDRARDMLYPERIYQEFEGDNATWWNFDPRVEWLMGYLTSHRSQKVLVICAKAATALQLEQVLREREGIRAAVFHEGMSIIERDRAAAWFAEEDTGAQVLLCSEIGSEGRNFQFASHMVMFDLPFNPDLLEQRIGRLDRIGQAHDIQIHVPYLEKTAQSVLVRWYHEGLDAFEHTCPTGRTIYDSVYNDLINYLASPDQTEGFDDLIKNCREQHEALKAQLEQGRDRLLEIHSNGGEKAQALAESIEEQDDDTNLIAFAMNLFDIIGINQDDRGDNMIVLTPSDHMLVPDFPGLSEDGITITFDREVALAREDAQFITWEHPLIRNGLDLILSGDTGSSTISLLKNKALPVGTLLVELIYVVEAQAPKQLQLNRFLPPTPVRMLLDKNGNNLAAQVEFETFNRQLNAVNRHTGSKLVNAVQQDVHAILQLGEAQIEKSARALIDAARNEADEKLSAELSRLEALRAVNPNIRDDELTAIESNRQQVMESLDQAGWRLDALRLIVVTHQ.

One can recognise a Helicase ATP-binding domain in the interval 164–334; that stretch reads DVGRRHAPRV…FARLRLLDPN (171 aa). Position 177 to 184 (177 to 184) interacts with ATP; sequence DEVGLGKT. Positions 280–283 match the DEAH box motif; sequence DEAH. One can recognise a Helicase C-terminal domain in the interval 490–662; it reads RVEWLMGYLT…YLASPDQTEG (173 aa).

This sequence belongs to the SNF2/RAD54 helicase family. RapA subfamily. In terms of assembly, interacts with the RNAP. Has a higher affinity for the core RNAP than for the holoenzyme. Its ATPase activity is stimulated by binding to RNAP.

Its function is as follows. Transcription regulator that activates transcription by stimulating RNA polymerase (RNAP) recycling in case of stress conditions such as supercoiled DNA or high salt concentrations. Probably acts by releasing the RNAP, when it is trapped or immobilized on tightly supercoiled DNA. Does not activate transcription on linear DNA. Probably not involved in DNA repair. This Escherichia coli (strain 55989 / EAEC) protein is RNA polymerase-associated protein RapA.